A 601-amino-acid chain; its full sequence is Probable sphingosine-1-phosphate lyase (601 aa).

K360 carries the post-translational modification N6-(pyridoxal phosphate)lysine.

It belongs to the group II decarboxylase family. Sphingosine-1-phosphate lyase subfamily. Requires pyridoxal 5'-phosphate as cofactor.

It carries out the reaction sphinganine 1-phosphate = hexadecanal + phosphoethanolamine. Functionally, cleaves phosphorylated sphingoid bases (PSBs), such as sphingosine-1-phosphate, into fatty aldehydes and phosphoethanolamine. Possibly implicated in influencing the macrophage autophagy pathway. The polypeptide is Probable sphingosine-1-phosphate lyase (Legionella pneumophila subsp. pneumophila (strain Philadelphia 1 / ATCC 33152 / DSM 7513)).